Reading from the N-terminus, the 181-residue chain is Ribulose bisphosphate carboxylase small subunit, chloroplastic 1 (181 aa).

The N-terminal 57 residues, 1 to 57, are a transit peptide targeting the chloroplast; it reads MASSIVSSAAVATRSNVAQASMVAPFTGLKSAASFPVTKKNNNVDITSLASNGGRVR.

Belongs to the RuBisCO small chain family. As to quaternary structure, heterohexadecamer of 8 large and 8 small subunits.

Its subcellular location is the plastid. The protein localises to the chloroplast. RuBisCO catalyzes two reactions: the carboxylation of D-ribulose 1,5-bisphosphate, the primary event in carbon dioxide fixation, as well as the oxidative fragmentation of the pentose substrate. Both reactions occur simultaneously and in competition at the same active site. Although the small subunit is not catalytic it is essential for maximal activity. This Solanum tuberosum (Potato) protein is Ribulose bisphosphate carboxylase small subunit, chloroplastic 1.